We begin with the raw amino-acid sequence, 455 residues long: D-inositol 3-phosphate glycosyltransferase (455 aa).

The segment at 1-25 (MSQHVSRLGGLRGRSHGHGAFGGPY) is disordered. Histidine 45 contacts 1D-myo-inositol 3-phosphate. Residues 51–52 (QP) and glycine 59 contribute to the UDP-N-acetyl-alpha-D-glucosamine site. 1D-myo-inositol 3-phosphate contacts are provided by residues 56 to 61 (DAGGMN), lysine 114, tyrosine 147, threonine 171, and arginine 191. Residues arginine 266 and lysine 271 each contribute to the UDP-N-acetyl-alpha-D-glucosamine site. Positions 341, 342, and 344 each coordinate Mg(2+). Positions 354 and 362 each coordinate UDP-N-acetyl-alpha-D-glucosamine. Threonine 368 serves as a coordination point for Mg(2+).

This sequence belongs to the glycosyltransferase group 1 family. MshA subfamily. Homodimer.

It catalyses the reaction 1D-myo-inositol 3-phosphate + UDP-N-acetyl-alpha-D-glucosamine = 1D-myo-inositol 2-acetamido-2-deoxy-alpha-D-glucopyranoside 3-phosphate + UDP + H(+). Functionally, catalyzes the transfer of a N-acetyl-glucosamine moiety to 1D-myo-inositol 3-phosphate to produce 1D-myo-inositol 2-acetamido-2-deoxy-glucopyranoside 3-phosphate in the mycothiol biosynthesis pathway. The chain is D-inositol 3-phosphate glycosyltransferase from Streptomyces bingchenggensis (strain BCW-1).